The sequence spans 214 residues: Epoxide hydrolase EphH (214 aa).

S28 functions as the Nucleophile in the catalytic mechanism. Active-site charge relay system residues include D156 and H186.

This sequence belongs to the AB hydrolase superfamily.

The catalysed reaction is an epoxide + H2O = an ethanediol. Inhibited by AUDA, a known epoxide hydrolase inhibitor. Functionally, catalyzes the hydrolysis of epoxide-containing substrates. In vitro, catalyzes the hydrolysis of the synthetic compounds PHOME and styrene oxide. Plays an essential role in subverting phagosomal acidification. Plays a major role in the survival of M.tuberculosis (Mtb) during in vitro acidic stress and protects Mtb in response to phagosomal acidification inside macrophages. Also supports Mtb growth under the nutrient-deprived condition at pH 7.0. The polypeptide is Epoxide hydrolase EphH (Mycobacterium tuberculosis (strain ATCC 25618 / H37Rv)).